Here is a 139-residue protein sequence, read N- to C-terminus: Large ribosomal subunit protein uL16 (139 aa).

The protein belongs to the universal ribosomal protein uL16 family. Part of the 50S ribosomal subunit.

Its function is as follows. Binds 23S rRNA and is also seen to make contacts with the A and possibly P site tRNAs. The polypeptide is Large ribosomal subunit protein uL16 (Rippkaea orientalis (strain PCC 8801 / RF-1) (Cyanothece sp. (strain PCC 8801))).